The following is a 651-amino-acid chain: Peptide-N(4)-(N-acetyl-beta-glucosaminyl)asparagine amidase (651 aa).

Ala-2 carries the post-translational modification N-acetylalanine. The region spanning 30-91 (EASKLLLTYA…EGETHLIFPK (62 aa)) is the PUB domain. The Zn(2+) site is built by Cys-247, Cys-250, Cys-280, and Cys-283. Catalysis depends on Cys-306, which acts as the Nucleophile. Residues His-333 and Asp-350 contribute to the active site. A PAW domain is found at 451 to 651 (ELGGRVSGSL…LEIIITFNDL (201 aa)).

It belongs to the transglutaminase-like superfamily. PNGase family. As to quaternary structure, component of a complex required to couple retrotranslocation, ubiquitination and deglycosylation composed of NGLY1, SAKS1, AMFR, VCP and RAD23B. Interacts with the proteasome components RAD23B and PSMC1. Interacts with directly with VCP. Interacts with DERL1, bringing it close to the endoplasmic reticulum membrane. Interacts with SAKS1. The cofactor is Zn(2+). In terms of tissue distribution, ubiquitously expressed with highest level in testis.

It localises to the cytoplasm. The enzyme catalyses Hydrolysis of an N(4)-(acetyl-beta-D-glucosaminyl)asparagine residue in which the glucosamine residue may be further glycosylated, to yield a (substituted) N-acetyl-beta-D-glucosaminylamine and a peptide containing an aspartate residue.. Inhibited by Z-VAD-fmk, a well-known caspase inhibitor, which inhibits enzyme activity through covalent binding of the carbohydrate to the single Cys-306 residue. Its function is as follows. Specifically deglycosylates the denatured form of N-linked glycoproteins in the cytoplasm and assists their proteasome-mediated degradation. Cleaves the beta-aspartyl-glucosamine (GlcNAc) of the glycan and the amide side chain of Asn, converting Asn to Asp. Prefers proteins containing high-mannose over those bearing complex type oligosaccharides. Can recognize misfolded proteins in the endoplasmic reticulum that are exported to the cytosol to be destroyed and deglycosylate them, while it has no activity toward native proteins. Deglycosylation is a prerequisite for subsequent proteasome-mediated degradation of some, but not all, misfolded glycoproteins. This is Peptide-N(4)-(N-acetyl-beta-glucosaminyl)asparagine amidase (Ngly1) from Mus musculus (Mouse).